The primary structure comprises 121 residues: Large ribosomal subunit protein uL22 (121 aa).

Belongs to the universal ribosomal protein uL22 family. In terms of assembly, part of the 50S ribosomal subunit.

This protein binds specifically to 23S rRNA; its binding is stimulated by other ribosomal proteins, e.g. L4, L17, and L20. It is important during the early stages of 50S assembly. It makes multiple contacts with different domains of the 23S rRNA in the assembled 50S subunit and ribosome. Functionally, the globular domain of the protein is located near the polypeptide exit tunnel on the outside of the subunit, while an extended beta-hairpin is found that lines the wall of the exit tunnel in the center of the 70S ribosome. This Salinibacter ruber (strain DSM 13855 / M31) protein is Large ribosomal subunit protein uL22.